Reading from the N-terminus, the 214-residue chain is Large ribosomal subunit protein uL3 (214 aa).

Gln-151 is modified (N5-methylglutamine).

The protein belongs to the universal ribosomal protein uL3 family. Part of the 50S ribosomal subunit. Forms a cluster with proteins L14 and L19. Post-translationally, methylated by PrmB.

In terms of biological role, one of the primary rRNA binding proteins, it binds directly near the 3'-end of the 23S rRNA, where it nucleates assembly of the 50S subunit. This chain is Large ribosomal subunit protein uL3, found in Saccharophagus degradans (strain 2-40 / ATCC 43961 / DSM 17024).